Reading from the N-terminus, the 97-residue chain is Nuclear protein 2 (97 aa).

A disordered region spans residues 76-97 (LLNGQRKRRQRQLHPKMRTRLT). The segment covering 80-97 (QRKRRQRQLHPKMRTRLT) has biased composition (basic residues).

It belongs to the NUPR family.

The protein resides in the nucleus. In terms of biological role, acts as a transcriptional repressor by inhibiting gene expression at the NUPR1 promoter in a p53/TP53-dependent manner in cancer cells. Involved in the G1 cell cycle arrest, and in a decrease in cell viability and cell proliferation. Plays a role as a negative regulator of the protumoral factor NUPR1. The chain is Nuclear protein 2 from Homo sapiens (Human).